The primary structure comprises 503 residues: Autophagy-related protein 32 (503 aa).

Disordered regions lie at residues 98–138 (AAGI…KSLE), 151–186 (LPED…SLNS), and 328–370 (DNSD…HKKR). A compositionally biased stretch (polar residues) spans 116 to 126 (NSPSAVHQQLH). The span at 155-171 (SNNINNNNKNGSTTGSN) shows a compositional bias: low complexity. The span at 342–354 (KRLKRSLQRKKKK) shows a compositional bias: basic residues. Basic and acidic residues predominate over residues 355 to 364 (FIETSAERNG). A helical transmembrane segment spans residues 380–396 (VLWGVSLTLGVGVGYCI).

It belongs to the ATG32 family.

Its subcellular location is the mitochondrion outer membrane. The protein resides in the vacuole membrane. The protein localises to the preautophagosomal structure membrane. Functionally, mitophagy-specific receptor that recruits the autophagic machinery to mitochondria and regulates selective degradation of mitochondria. Mitophagy contributes to regulate mitochondrial quantity and quality by eliminating the mitochondria to a basal level to fulfill cellular energy requirements and preventing excess ROS production. Recruits ATG11 to the surface of mitochondria. Also promotes autophagy-dependent peroxisome degradation. This is Autophagy-related protein 32 (ATG32) from Zygosaccharomyces rouxii (strain ATCC 2623 / CBS 732 / NBRC 1130 / NCYC 568 / NRRL Y-229).